We begin with the raw amino-acid sequence, 1432 residues long: ABC transporter B family member 3 (1432 aa).

Disordered stretches follow at residues 1–21 (MDDG…EEEI) and 48–149 (ITQP…KTEE). Composition is skewed to low complexity over residues 52–62 (SNNNNNSNNNN), 76–106 (NNNN…FNNN), and 118–135 (NTNE…NNND). Residues 117–163 (ENTNENNNKNNNNNNNNNDDYNDGADERVKTEEEIKKEAENELNQSV) are a coiled coil. The region spanning 180 to 479 (MFLGTIAAVI…ASPCLALFAQ (300 aa)) is the ABC transmembrane type-1 1 domain. Transmembrane regions (helical) follow at residues 185–205 (IAAV…GLVV), 232–252 (LLML…LWMI), 303–323 (KVGR…IGFT), 325–345 (GWQL…GGFF), 410–430 (GLGL…AFWY), and 457–477 (FFAV…LALF). The ABC transporter 1 domain occupies 514-750 (IEFKDVGFHY…QGLYFDLVEK (237 aa)). ATP is bound at residue 549 to 556 (GDSGGGKS). A disordered region spans residues 787-819 (KRSLRKNESESNKKDKEDSNNKKKKKSNKKKVE). Basic and acidic residues predominate over residues 791 to 807 (RKNESESNKKDKEDSNN). Residues 837-1157 (WCFGFLSAVG…ASSFAPDLAK (321 aa)) form the ABC transmembrane type-1 2 domain. Transmembrane regions (helical) follow at residues 838–858 (CFGF…AMVF), 882–902 (LMFV…GFLF), 968–988 (MVGG…VIIA), 989–1009 (CFPL…GFSS), 1060–1080 (ISGF…CLSF), and 1134–1154 (VFFA…FAPD). One can recognise an ABC transporter 2 domain in the interval 1192–1428 (IEFKNLHFSY…EGPYSQLWYN (237 aa)). 1227 to 1234 (GDSGGGKS) contributes to the ATP binding site.

Belongs to the ABC transporter superfamily. ABCB family. Multidrug resistance exporter (TC 3.A.1.201) subfamily.

Its subcellular location is the membrane. In Dictyostelium discoideum (Social amoeba), this protein is ABC transporter B family member 3 (abcB3).